A 1418-amino-acid chain; its full sequence is Transcriptional regulator ADR1 (1418 aa).

2 stretches are compositionally biased toward low complexity: residues 34-44 and 68-93; these read TTTTANMSNTT and TSMS…TTTS. The tract at residues 34–96 is disordered; the sequence is TTTTANMSNT…AATTTTSKKS (63 aa). 2 C2H2-type zinc fingers span residues 117-139 and 145-168; these read FVCQ…ERSH and FSCG…QKLH. Disordered regions lie at residues 181-285, 403-426, 454-484, 1132-1167, and 1338-1362; these read KSIK…LDQR, SQHG…RSES, VAAH…GLSR, NSNS…NNSN, and TNTN…NQHH. The segment covering 189–211 has biased composition (acidic residues); it reads GDDDDDDDDDDEEMANSEDENDH. Over residues 236–278 the composition is skewed to polar residues; sequence NLFNSKQKPTKANTTKSKVAKLSTTTSRKNSTNPTRKNSSSLH. 3 stretches are compositionally biased toward low complexity: residues 462–477, 1145–1167, and 1338–1356; these read QQQQ…QPNQ, NEIN…NNSN, and TNTN…DNGT.

It localises to the nucleus. In terms of biological role, transcription factor involved in the regulation of hyphal growth. The protein is Transcriptional regulator ADR1 (ADR1) of Candida albicans (strain SC5314 / ATCC MYA-2876) (Yeast).